The sequence spans 404 residues: Phosphopentomutase (404 aa).

Residues Asp-10, Asp-303, His-308, Asp-344, His-345, and His-356 each coordinate Mn(2+).

This sequence belongs to the phosphopentomutase family. Requires Mn(2+) as cofactor.

It is found in the cytoplasm. The catalysed reaction is 2-deoxy-alpha-D-ribose 1-phosphate = 2-deoxy-D-ribose 5-phosphate. It carries out the reaction alpha-D-ribose 1-phosphate = D-ribose 5-phosphate. Its pathway is carbohydrate degradation; 2-deoxy-D-ribose 1-phosphate degradation; D-glyceraldehyde 3-phosphate and acetaldehyde from 2-deoxy-alpha-D-ribose 1-phosphate: step 1/2. Functionally, isomerase that catalyzes the conversion of deoxy-ribose 1-phosphate (dRib-1-P) and ribose 1-phosphate (Rib-1-P) to deoxy-ribose 5-phosphate (dRib-5-P) and ribose 5-phosphate (Rib-5-P), respectively. The chain is Phosphopentomutase from Shewanella sp. (strain MR-4).